A 255-amino-acid polypeptide reads, in one-letter code: SKA complex subunit 1 (255 aa).

Ala2 carries the N-acetylalanine modification. The stretch at 49–91 (INELLNKLELEIQYQEQTNNSLKELCESLEEDYKDIEHLKENV) forms a coiled coil. The flexiple loop that anchors MAPRE1 stretch occupies residues 92–132 (PSHLPQVTVTQSCVKGSDLDPEEPIKVEEPEPVKKPPKEQR). An SXLP motif; mediates interaction with MAPRE1, targeting to microtubule plus ends, stabilization on kinetochores and is required for proper chromosome alignment to the metaphase plate motif is present at residues 93 to 96 (SHLP). Residues 106 to 131 (KGSDLDPEEPIKVEEPEPVKKPPKEQ) form a disordered region. Residues 114–131 (EPIKVEEPEPVKKPPKEQ) are compositionally biased toward basic and acidic residues. Positions 132–255 (RSIKEMPFIT…GGGLTRYVIT (124 aa)) are binds microtubules and protein phosphatase PP1 subunit PPP1CA. Phosphothreonine; by AURKB is present on Thr157. Ser242 carries the phosphoserine; by AURKB modification.

It belongs to the SKA1 family. As to quaternary structure, component of the SKA complex, composed of SKA1, SKA2 and SKA3. The SKA complex is a homodimer organized around a central W-shaped coiled-coil structure, formed by the interacting domains of SKA1, SKA2, and SKA3, each end of the 'W' is extended further by the C-terminal microtubule-binding domains of SKA1 and SKA3; the complex forms extended structures on microtubules. Interacts (via SXLP motif) with MAPRE1 (via C-terminus); the interaction is direct and stabilizes the kinetochore-microtubule attachment of the SKA1 complex. Interacts (via C-terminus) with protein phosphatase PP1 subunit PPP1CA; the interaction is direct and required for recruitment of PPP1CA to the kinetochore. Interacts with the NDC80 complex; the interaction is required to establish kinetochore-microtubule end-on attachments. Post-translationally, phosphorylated by AURKB at Thr-157 and Ser-242 which negatively regulates the association of the SKA complex with kinetochores to allow correction of aberrant kinetochore-microtubule interactions and promote mitotic sister chromatid biorientation.

The protein localises to the cytoplasm. It localises to the cytoskeleton. The protein resides in the spindle. It is found in the chromosome. Its subcellular location is the centromere. The protein localises to the kinetochore. It localises to the microtubule organizing center. The protein resides in the centrosome. In terms of biological role, component of the SKA complex, a microtubule plus end-binding complex of the outer kinetochore that stabilizes spindle microtubule-kinetochore attachments, promotes alignment of chromosomes at the mitotic spindle equator (chromosome congression) and assists suppression of the spindle assembly checkpoint. Kinetochores, consisting of a centromere-associated inner segment and a microtubule-contacting outer segment, play a crucial role in chromosome segregation by mediating the physical connection between centromeric DNA and spindle microtubules. The outer kinetochore is made up of the ten-subunit KMN network complex, comprising the MIS12, NDC80 and KNL1 complexes, and auxiliary microtubule-associated components such as the SKA complex; together they connect the outer kinetochore with the inner kinetochore, bind microtubules, and mediate interactions with mitotic checkpoint proteins that delay anaphase until chromosomes are bioriented on the spindle. The SKA complex is loaded onto bioriented kinetochores and it facilitates chromosome congression by stabilizing microtubules together with MAPRE1, and end-on attachment of the NDC80 complex to depolymerizing spindle microtubules, thereby assisting the poleward-moving kinetochore in withstanding microtubule pulling forces. The complex associates with dynamic microtubule plus-ends and can track both depolymerizing and elongating microtubules. The complex recruits protein phosphatase 1 (PP1) to the kinetochore in prometaphase and metaphase, to oppose spindle assembly checkpoint signaling and promote the onset of anaphase. In the complex, it mediates interactions with microtubules. It also stimulates AURKB/Aurora B catalytic activity. During meiosis the SKA complex stabilizes the meiotic spindle and is required for its migration to the cortex. The polypeptide is SKA complex subunit 1 (SKA1) (Homo sapiens (Human)).